The sequence spans 517 residues: DNA relaxase MbeA (517 aa).

Catalysis depends on tyrosine 19, which acts as the O-(5'-phospho-DNA)-tyrosine intermediate. The a divalent metal cation site is built by histidine 97, glutamate 104, and asparagine 106. Disordered regions lie at residues 281 to 310, 380 to 405, and 496 to 517; these read YSPVHSLDRGIAGKTPGRGERGDDAAQEGR, PSVREISGGDSLSGERVGTSEGVTQS, and SLERERQPEIQERTLDGPSLGW. Positions 297-310 are enriched in basic and acidic residues; sequence GRGERGDDAAQEGR. Over residues 496 to 510 the composition is skewed to basic and acidic residues; sequence SLERERQPEIQERTL.

It to E.coli MbaA and MbkA. Interacts with MbeB and MbeC to form the relaxosome. Requires Mn(2+) as cofactor. Co(2+) serves as cofactor. Ni(2+) is required as a cofactor.

The enzyme catalyses ATP-independent breakage of single-stranded DNA, followed by passage and rejoining.. Its function is as follows. Relaxase involved in plasmid ColE1 conjugative mobilization and is thus essential to promote the specific transfer of the plasmid during conjugation. First catalyzes the specific cleavage of one of the DNA strands at oriT, forming a covalent 5'-phosphotyrosine intermediate. The nic site corresponds to 5'-(1469)CTGG/CTTA(1462)-3' in the cleaved strand. The cleaved strand is then transferred through the dedicated type IV secretion apparatus. MbeA remains covalently linked at the 5' end of the strand, and once in the recipient cell, it probably catalyzes the rejoining of the two ends of the strand, re-forming the circular plasmid DNA. Is functional in vitro without a requirement for the conjugative accessory proteins. This is DNA relaxase MbeA (mbeA) from Escherichia coli.